The chain runs to 918 residues: DNA repair and recombination protein RAD54B (918 aa).

Residues 1–11 (MRRSAAPSQVL) are compositionally biased toward polar residues. The tract at residues 1-29 (MRRSAAPSQVLGNVAKKPRFIPPGKSNAL) is disordered. A Helicase ATP-binding domain is found at 320-487 (GMRVSGRFGA…YALIEFVNPG (168 aa)). ATP is bound at residue 333-340 (DEMGLGKT). Positions 438–441 (DEGH) match the DEGH box motif. Residues 653–817 (VLVKLLAAIR…HIHFSVEELR (165 aa)) form the Helicase C-terminal domain. The interval 842-873 (KDHQNPSSKKPSVSRCCQLRQDQGKHNSKKPL) is disordered.

The protein belongs to the SNF2/RAD54 helicase family.

It is found in the nucleus. In terms of biological role, involved in DNA repair and mitotic recombination. The chain is DNA repair and recombination protein RAD54B (RAD54B) from Gallus gallus (Chicken).